The sequence spans 328 residues: Phenylalanine--tRNA ligase alpha subunit (328 aa).

Glutamate 253 lines the Mg(2+) pocket.

This sequence belongs to the class-II aminoacyl-tRNA synthetase family. Phe-tRNA synthetase alpha subunit type 1 subfamily. In terms of assembly, tetramer of two alpha and two beta subunits. It depends on Mg(2+) as a cofactor.

Its subcellular location is the cytoplasm. It carries out the reaction tRNA(Phe) + L-phenylalanine + ATP = L-phenylalanyl-tRNA(Phe) + AMP + diphosphate + H(+). This Coxiella burnetii (strain CbuG_Q212) (Coxiella burnetii (strain Q212)) protein is Phenylalanine--tRNA ligase alpha subunit.